The following is a 424-amino-acid chain: Serine--tRNA ligase (424 aa).

230-232 (TAE) lines the L-serine pocket. 261 to 263 (RAE) is an ATP binding site. Glu-284 serves as a coordination point for L-serine. Residue 348 to 351 (EISS) participates in ATP binding. Ser-384 contacts L-serine.

This sequence belongs to the class-II aminoacyl-tRNA synthetase family. Type-1 seryl-tRNA synthetase subfamily. As to quaternary structure, homodimer. The tRNA molecule binds across the dimer.

Its subcellular location is the cytoplasm. The catalysed reaction is tRNA(Ser) + L-serine + ATP = L-seryl-tRNA(Ser) + AMP + diphosphate + H(+). It carries out the reaction tRNA(Sec) + L-serine + ATP = L-seryl-tRNA(Sec) + AMP + diphosphate + H(+). The protein operates within aminoacyl-tRNA biosynthesis; selenocysteinyl-tRNA(Sec) biosynthesis; L-seryl-tRNA(Sec) from L-serine and tRNA(Sec): step 1/1. In terms of biological role, catalyzes the attachment of serine to tRNA(Ser). Is also able to aminoacylate tRNA(Sec) with serine, to form the misacylated tRNA L-seryl-tRNA(Sec), which will be further converted into selenocysteinyl-tRNA(Sec). This is Serine--tRNA ligase from Desulforamulus reducens (strain ATCC BAA-1160 / DSM 100696 / MI-1) (Desulfotomaculum reducens).